The following is a 974-amino-acid chain: Probable proton ATPase 1B (974 aa).

Residues 1–23 show a composition bias toward basic and acidic residues; sequence MSSKKYELDAAAFEDKPESHSDA. The tract at residues 1-61 is disordered; that stretch reads MSSKKYELDA…ATDLLPPSKG (61 aa). 4 consecutive transmembrane segments (helical) span residues 93 to 112, 118 to 137, 265 to 286, and 295 to 321; these read GLWG…EFAL, GAIL…YETI, VMLA…YLLA, and ALQF…TLAV. D351 functions as the 4-aspartylphosphate intermediate in the catalytic mechanism. The next 6 membrane-spanning stretches (helical) occupy residues 631-651, 662-684, 698-712, 738-761, 813-840, and 869-887; these read AAAD…AMLV, FLTY…CFSL, FFHL…ITLL, VVFV…LWIG, FFFY…AASF, and VWIY…KVLA. The tract at residues 952-974 is disordered; it reads REDTHVLNESTSPVNAFSPKVKK.

This sequence belongs to the cation transport ATPase (P-type) (TC 3.A.3) family. Type IIIA subfamily.

Its subcellular location is the membrane. It catalyses the reaction ATP + H2O + H(+)(in) = ADP + phosphate + 2 H(+)(out). The polypeptide is Probable proton ATPase 1B (H1B) (Leishmania donovani).